Here is a 40-residue protein sequence, read N- to C-terminus: Amyloid-beta precursor protein (40 aa).

Belongs to the APP family. Binds, via its C-terminus, to the PID domain of several cytoplasmic proteins, including APBB family members, the APBA family, MAPK8IP1, SHC1 and NUMB and DAB1. Binding to DAB1 inhibits its serine phosphorylation. Interacts (via NPXY motif) with DAB2 (via PID domain); the interaction is impaired by tyrosine phosphorylation of the NPXY motif. Also interacts with GPCR-like protein BPP, APPBP1, IB1, KNS2 (via its TPR domains), APPBP2 (via BaSS) and DDB1. In vitro, it binds MAPT via the MT-binding domains. Associates with microtubules in the presence of ATP and in a kinesin-dependent manner. Interacts, through a C-terminal domain, with GNAO1. Interacts with CPEB1, ANKS1B and AGER. Interacts with ITM2B. Interacts with ITM2C. Interacts with IDE. Can form homodimers; dimerization is enhanced in the presence of Cu(2+) ions. Can form homodimers; this is promoted by heparin binding. Interacts with SORL1 (via N-terminal ectodomain); this interaction retains APP in the trans-Golgi network and reduces processing into soluble APP-alpha and amyloid-beta peptides. Interacts with PLD3. Interacts with VDAC1. Interacts with NSG1; could regulate APP processing. Interacts with LRRK2. Interacts (via cytoplasmic domain) with KIF5B. Interacts (via C-terminus) with APBB2/FE65L1 (via C-terminus). Interacts (via intracellular domain) with APBB3. Proteolytically processed under normal cellular conditions. Cleavage either by alpha-secretase, beta-secretase or theta-secretase leads to generation and extracellular release of soluble APP peptides, S-APP-alpha and S-APP-beta, and the retention of corresponding membrane-anchored C-terminal fragments, C80, C83 and C99. Subsequent processing of C80 and C83 by gamma-secretase yields P3 peptides. This is the major secretory pathway and is non-amyloidogenic. Alternatively, presenilin/nicastrin-mediated gamma-secretase processing of C99 releases the amyloid-beta proteins, amyloid-beta protein 40 and amyloid-beta protein 42, major components of amyloid plaques, and the cytotoxic C-terminal fragments, gamma-CTF(50), gamma-CTF(57) and gamma-CTF(59). PSEN1 cleavage is more efficient with C83 than with C99 as substrate (in vitro). Amyloid-beta protein 40 and Amyloid-beta protein 42 are cleaved by ACE. Many other minor amyloid-beta peptides, amyloid-beta 1-X peptides, are found in cerebral spinal fluid (CSF) including the amyloid-beta X-15 peptides, produced from the cleavage by alpha-secretase.

It is found in the cell membrane. The protein resides in the membrane. It localises to the perikaryon. Its subcellular location is the cell projection. The protein localises to the growth cone. It is found in the clathrin-coated pit. The protein resides in the early endosome. It localises to the cytoplasmic vesicle. In terms of biological role, functions as a cell surface receptor and performs physiological functions on the surface of neurons relevant to neurite growth, neuronal adhesion and axonogenesis. Interaction between APP molecules on neighboring cells promotes synaptogenesis. Involved in cell mobility and transcription regulation through protein-protein interactions. Can promote transcription activation through binding to APBB1-KAT5 and inhibit Notch signaling through interaction with Numb. Couples to apoptosis-inducing pathways such as those mediated by G(o) and JIP. Inhibits G(o)-alpha ATPase activity. Acts as a kinesin I membrane receptor, mediating the axonal transport of beta-secretase and presenilin 1. May be involved in copper homeostasis/oxidative stress through copper ion reduction. In vitro, copper-metallated APP induces neuronal death directly or is potentiated through Cu(2+)-mediated low-density lipoprotein oxidation. Can regulate neurite outgrowth through binding to components of the extracellular matrix such as heparin and collagen I and IV. Induces a AGER-dependent pathway that involves activation of p38 MAPK, resulting in internalization of amyloid-beta peptide and mitochondrial dysfunction in cultured cortical neurons. Provides Cu(2+) ions for GPC1 which are required for release of nitric oxide (NO) and subsequent degradation of the heparan sulfate chains on GPC1. This Felis catus (Cat) protein is Amyloid-beta precursor protein.